A 370-amino-acid chain; its full sequence is sn-glycerol-3-phosphate import ATP-binding protein UgpC (370 aa).

One can recognise an ABC transporter domain in the interval 4–236 (LSLKNIAKRY…PATAFVAAFM (233 aa)). 38 to 45 (GPSGCGKS) contributes to the ATP binding site.

The protein belongs to the ABC transporter superfamily. sn-glycerol-3-phosphate importer (TC 3.A.1.1.3) family. In terms of assembly, the complex is composed of two ATP-binding proteins (UgpC), two transmembrane proteins (UgpA and UgpE) and a solute-binding protein (UgpB).

The protein resides in the cell inner membrane. It catalyses the reaction sn-glycerol 3-phosphate(out) + ATP + H2O = sn-glycerol 3-phosphate(in) + ADP + phosphate + H(+). In terms of biological role, part of the ABC transporter complex UgpBAEC involved in sn-glycerol-3-phosphate (G3P) import. Responsible for energy coupling to the transport system. The chain is sn-glycerol-3-phosphate import ATP-binding protein UgpC from Chromobacterium violaceum (strain ATCC 12472 / DSM 30191 / JCM 1249 / CCUG 213 / NBRC 12614 / NCIMB 9131 / NCTC 9757 / MK).